A 1038-amino-acid chain; its full sequence is Probable LRR receptor-like serine/threonine-protein kinase At1g53430 (1038 aa).

An N-terminal signal peptide occupies residues 1 to 28 (MGFIFSTEKVVYVLLLIFVCLENFGSNA). Over 29–609 (QLLPEDEVQT…VDTGKPLSNG (581 aa)) the chain is Extracellular. Asn-48, Asn-77, Asn-85, Asn-112, and Asn-127 each carry an N-linked (GlcNAc...) asparagine glycan. LRR repeat units follow at residues 113–137 (LTRL…LSQI), 139–160 (LEIL…LGDI), 161–184 (TTLT…LGNL), 185–208 (RSLK…LSNL), 210–234 (NLTE…NWTL), and 236–256 (ERLD…ISNL). Asn-196, Asn-210, Asn-231, Asn-255, and Asn-258 each carry an N-linked (GlcNAc...) asparagine glycan. 5 LRR repeats span residues 259 to 281 (LTEL…LRNL), 282 to 305 (MKMK…IGSM), 306 to 328 (SELK…TFRN), 330 to 351 (DAFN…QFII), and 352 to 374 (NSKE…SCNQ). N-linked (GlcNAc...) asparagine glycosylation is found at Asn-339, Asn-363, Asn-471, and Asn-561. Residues 610-630 (AVAGIVIAACAVFGLLVLVIL) traverse the membrane as a helical segment. The Cytoplasmic segment spans residues 631 to 1038 (RLTGYLGGKE…LDDLTDVKIE (408 aa)). Thr-658 is modified (phosphothreonine). A Protein kinase domain is found at 669 to 950 (FDPENKIGEG…EGKIKVQPPL (282 aa)). ATP is bound by residues 675 to 683 (IGEGGFGPV) and Lys-697. The residue at position 742 (Tyr-742) is a Phosphotyrosine. Catalysis depends on Asp-795, which acts as the Proton acceptor. A Phosphoserine modification is found at Ser-828. Phosphothreonine is present on residues Thr-829 and Thr-834. A Phosphotyrosine modification is found at Tyr-842. Residues 984–1038 (RNREQDISSSSMDGPWVDSSFSEPGKDVSLQQQEEGRSSSSSRKLLDDLTDVKIE) form a disordered region. Residues 1027–1038 (KLLDDLTDVKIE) are compositionally biased toward basic and acidic residues.

The protein belongs to the protein kinase superfamily. Ser/Thr protein kinase family.

Its subcellular location is the membrane. The enzyme catalyses L-seryl-[protein] + ATP = O-phospho-L-seryl-[protein] + ADP + H(+). The catalysed reaction is L-threonyl-[protein] + ATP = O-phospho-L-threonyl-[protein] + ADP + H(+). This chain is Probable LRR receptor-like serine/threonine-protein kinase At1g53430, found in Arabidopsis thaliana (Mouse-ear cress).